We begin with the raw amino-acid sequence, 272 residues long: Imidazole glycerol phosphate synthase subunit HisF (272 aa).

Residues Asp-11 and Asp-130 contribute to the active site.

It belongs to the HisA/HisF family. Heterodimer of HisH and HisF.

It is found in the cytoplasm. The enzyme catalyses 5-[(5-phospho-1-deoxy-D-ribulos-1-ylimino)methylamino]-1-(5-phospho-beta-D-ribosyl)imidazole-4-carboxamide + L-glutamine = D-erythro-1-(imidazol-4-yl)glycerol 3-phosphate + 5-amino-1-(5-phospho-beta-D-ribosyl)imidazole-4-carboxamide + L-glutamate + H(+). The protein operates within amino-acid biosynthesis; L-histidine biosynthesis; L-histidine from 5-phospho-alpha-D-ribose 1-diphosphate: step 5/9. IGPS catalyzes the conversion of PRFAR and glutamine to IGP, AICAR and glutamate. The HisF subunit catalyzes the cyclization activity that produces IGP and AICAR from PRFAR using the ammonia provided by the HisH subunit. The chain is Imidazole glycerol phosphate synthase subunit HisF from Methanococcus maripaludis (strain DSM 14266 / JCM 13030 / NBRC 101832 / S2 / LL).